Reading from the N-terminus, the 21-residue chain is Buforin-2 (21 aa).

K21 bears the N6-(2-hydroxyisobutyryl)lysine; alternate mark.

The protein belongs to the histone H2A family. In terms of tissue distribution, expressed by the skin glands.

It localises to the secreted. In terms of biological role, antimicrobial peptide with potent activity against some Gram-positive and Gram-negative bacteria. Does not permeabilize membrane, but internalizes into bacterial cells and alter specific gene expression involved in bacterial resistance mechanisms. Has the ability to agglutinate E.coli, and lipid vesicles. Shows a weak hemolytic activity, and is not cytotoxic to monocytes. The protein is Buforin-2 of Sphaenorhynchus lacteus (Orinoco lime treefrog).